The chain runs to 202 residues: Urease accessory protein UreG (202 aa).

11 to 18 (GPVGSGKT) serves as a coordination point for GTP.

This sequence belongs to the SIMIBI class G3E GTPase family. UreG subfamily. As to quaternary structure, homodimer. UreD, UreF and UreG form a complex that acts as a GTP-hydrolysis-dependent molecular chaperone, activating the urease apoprotein by helping to assemble the nickel containing metallocenter of UreC. The UreE protein probably delivers the nickel.

Its subcellular location is the cytoplasm. Facilitates the functional incorporation of the urease nickel metallocenter. This process requires GTP hydrolysis, probably effectuated by UreG. The sequence is that of Urease accessory protein UreG from Magnetococcus marinus (strain ATCC BAA-1437 / JCM 17883 / MC-1).